A 376-amino-acid polypeptide reads, in one-letter code: UPF0754 membrane protein SERP1382 (376 aa).

A run of 2 helical transmembrane segments spans residues 4-24 (ILLVVFMIILGAIIGGVTNMI) and 356-376 (TLGFILGGIIGFFQGVIAIFV).

Belongs to the UPF0754 family.

The protein localises to the cell membrane. The chain is UPF0754 membrane protein SERP1382 from Staphylococcus epidermidis (strain ATCC 35984 / DSM 28319 / BCRC 17069 / CCUG 31568 / BM 3577 / RP62A).